The chain runs to 162 residues: UPF0114 protein PST_0950 (162 aa).

Helical transmembrane passes span 15–35 (LLAPIYFGLAFALLALAIKFF), 53–73 (LVLTLLSLIDMALVGGLLVMV), and 136–156 (LMWYVIIHLTFVVSAFAMGYM).

This sequence belongs to the UPF0114 family.

The protein localises to the cell membrane. This chain is UPF0114 protein PST_0950, found in Stutzerimonas stutzeri (strain A1501) (Pseudomonas stutzeri).